We begin with the raw amino-acid sequence, 101 residues long: Urease subunit beta (101 aa).

It belongs to the urease beta subunit family. As to quaternary structure, heterotrimer of UreA (gamma), UreB (beta) and UreC (alpha) subunits. Three heterotrimers associate to form the active enzyme.

The protein resides in the cytoplasm. The catalysed reaction is urea + 2 H2O + H(+) = hydrogencarbonate + 2 NH4(+). Its pathway is nitrogen metabolism; urea degradation; CO(2) and NH(3) from urea (urease route): step 1/1. The protein is Urease subunit beta of Burkholderia thailandensis (strain ATCC 700388 / DSM 13276 / CCUG 48851 / CIP 106301 / E264).